Consider the following 265-residue polypeptide: Glutamate racemase (265 aa).

Substrate contacts are provided by residues 9 to 10 (DS) and 41 to 42 (YG). Cysteine 72 functions as the Proton donor/acceptor in the catalytic mechanism. Position 73 to 74 (73 to 74 (NT)) interacts with substrate. Residue cysteine 183 is the Proton donor/acceptor of the active site. 184–185 (TH) is a substrate binding site.

This sequence belongs to the aspartate/glutamate racemases family.

It catalyses the reaction L-glutamate = D-glutamate. Its pathway is cell wall biogenesis; peptidoglycan biosynthesis. Functionally, provides the (R)-glutamate required for cell wall biosynthesis. This Lysinibacillus sphaericus (Bacillus sphaericus) protein is Glutamate racemase.